Reading from the N-terminus, the 71-residue chain is Translation initiation factor IF-1 (71 aa).

In terms of domain architecture, S1-like spans Met1–His71.

This sequence belongs to the IF-1 family. As to quaternary structure, component of the 30S ribosomal translation pre-initiation complex which assembles on the 30S ribosome in the order IF-2 and IF-3, IF-1 and N-formylmethionyl-tRNA(fMet); mRNA recruitment can occur at any time during PIC assembly.

It is found in the cytoplasm. One of the essential components for the initiation of protein synthesis. Stabilizes the binding of IF-2 and IF-3 on the 30S subunit to which N-formylmethionyl-tRNA(fMet) subsequently binds. Helps modulate mRNA selection, yielding the 30S pre-initiation complex (PIC). Upon addition of the 50S ribosomal subunit IF-1, IF-2 and IF-3 are released leaving the mature 70S translation initiation complex. The protein is Translation initiation factor IF-1 of Rickettsia conorii (strain ATCC VR-613 / Malish 7).